The following is a 526-amino-acid chain: ATP synthase subunit alpha (526 aa).

An ATP-binding site is contributed by 171 to 178 (GDRQTGKT).

The protein belongs to the ATPase alpha/beta chains family. In terms of assembly, F-type ATPases have 2 components, CF(1) - the catalytic core - and CF(0) - the membrane proton channel. CF(1) has five subunits: alpha(3), beta(3), gamma(1), delta(1), epsilon(1). CF(0) has four main subunits: a(1), b(1), b'(1) and c(9-12).

The protein localises to the cell inner membrane. It carries out the reaction ATP + H2O + 4 H(+)(in) = ADP + phosphate + 5 H(+)(out). In terms of biological role, produces ATP from ADP in the presence of a proton gradient across the membrane. The alpha chain is a regulatory subunit. The chain is ATP synthase subunit alpha from Chlorobaculum tepidum (strain ATCC 49652 / DSM 12025 / NBRC 103806 / TLS) (Chlorobium tepidum).